Here is a 241-residue protein sequence, read N- to C-terminus: MGKTMFKKTLLFFTALFFTALCAFSANANVIITGTRVIYPAGQKNVIVKLENNDDSAALVQAWIDNGNPNADPKYTKTPFVITPPVARVEAKSGQSLRITFTGGEPLPDDRESLFYFNLLDIPPKPDAEFLAKHGSFMQIAIRSRLKLFYRPAKLSLDPFDAMKKVVFKATPKGVLVDNQTPYYMNYIGLLHQNKPAKNVKMVAPFSQAVFEAKGVRSGDKLKWVLVNDYGADQEGDAIAQ.

An N-terminal signal peptide occupies residues Met1–Asn27.

This sequence belongs to the periplasmic pilus chaperone family.

It is found in the periplasm. Mediates assembly of pili by forming soluble multimeric complexes with pili subunits as an intermediate step in the assembly process. This protein is involved in type B pili (HifA) assembly. The polypeptide is Chaperone protein HifB (hifB) (Haemophilus influenzae).